A 193-amino-acid chain; its full sequence is Ribonuclease HII (193 aa).

Positions 15–193 constitute an RNase H type-2 domain; sequence CIVAGIDEAG…PYHRRSFRCC (179 aa). Positions 21, 22, and 112 each coordinate a divalent metal cation.

Belongs to the RNase HII family. The cofactor is Mn(2+). Mg(2+) serves as cofactor.

The protein resides in the cytoplasm. The enzyme catalyses Endonucleolytic cleavage to 5'-phosphomonoester.. Functionally, endonuclease that specifically degrades the RNA of RNA-DNA hybrids. In Rickettsia rickettsii (strain Iowa), this protein is Ribonuclease HII.